Reading from the N-terminus, the 459-residue chain is Trigger factor (459 aa).

In terms of domain architecture, PPIase FKBP-type spans 161–246; sequence GDKVVIDFQG…IKKIMEGKLP (86 aa).

The protein belongs to the FKBP-type PPIase family. Tig subfamily.

Its subcellular location is the cytoplasm. The catalysed reaction is [protein]-peptidylproline (omega=180) = [protein]-peptidylproline (omega=0). Functionally, involved in protein export. Acts as a chaperone by maintaining the newly synthesized protein in an open conformation. Functions as a peptidyl-prolyl cis-trans isomerase. The chain is Trigger factor from Legionella pneumophila (strain Corby).